Here is a 1801-residue protein sequence, read N- to C-terminus: U3 small nucleolar RNA-associated protein 10 (1801 aa).

One copy of the HEAT 1 repeat lies at 582-619 (IDFQALVPFVLVALGDVSERIRREAAAVLAALGALYKK). A run of 2 helical transmembrane segments spans residues 945–965 (IQSG…AIVN) and 1001–1021 (ALLL…HSVM). HEAT repeat units lie at residues 1045–1082 (QTID…AFEH), 1252–1289 (LSLI…QNPE), 1296–1334 (NRML…KYGK), and 1757–1794 (ALLP…VLGE).

Belongs to the HEATR1/UTP10 family. Component of the ribosomal small subunit (SSU) processome.

The protein localises to the nucleus. It localises to the nucleolus. The protein resides in the membrane. Involved in nucleolar processing of pre-18S ribosomal RNA. Involved in ribosome biosynthesis. The protein is U3 small nucleolar RNA-associated protein 10 of Aspergillus terreus (strain NIH 2624 / FGSC A1156).